The chain runs to 1202 residues: Caffeine-induced protein 16 (1202 aa).

In terms of domain architecture, PAP-associated spans 1105–1159 (NIALLLRGFFCYYGLTTQYSFDWEAYMIDISSSQLKRKSTEFKDCPFVVLDPFLK).

The polypeptide is Caffeine-induced protein 16 (cid16) (Schizosaccharomyces pombe (strain 972 / ATCC 24843) (Fission yeast)).